Here is a 4538-residue protein sequence, read N- to C-terminus: Polyketide synthase PksL (4538 aa).

The segment at 1–123 (MRWRSNVKKI…ADMHADSPAI (123 aa)) is N-terminal hotdog fold 1. The 285-residue stretch at 1 to 285 (MRWRSNVKKI…SKLVREAELI (285 aa)) folds into the PKS/mFAS DH 1 domain. Residue histidine 26 is the Proton acceptor; for dehydratase activity 1 of the active site. Residues 138–285 (QNVVQLDDVY…SKLVREAELI (148 aa)) form a C-terminal hotdog fold 1 region. Aspartate 199 acts as the Proton donor; for dehydratase activity 1 in catalysis. Residues 289 to 314 (HQDAQETQMTRADTAERDKPADMVSS) form a disordered region. A Carrier 1 domain is found at 320-394 (SEAEQFVSQL…ELSAFLAEEY (75 aa)). An O-(pantetheine 4'-phosphoryl)serine modification is found at serine 354. The region spanning 433 to 871 (AGDIAIIGLA…GSNAHIILEE (439 aa)) is the Ketosynthase family 3 (KS3) 1 domain. Active-site for beta-ketoacyl synthase 1 activity residues include cysteine 609, histidine 744, and histidine 784. The tract at residues 1048-1226 (HILHPLLHQN…DSLYAGENGV (179 aa)) is dehydratase. The tract at residues 1051–1175 (HPLLHQNVSD…GSAVLCEAGE (125 aa)) is N-terminal hotdog fold 2. Residues 1051-1340 (HPLLHQNVSD…ARVLETDQEG (290 aa)) enclose the PKS/mFAS DH 2 domain. The Proton acceptor; for dehydratase activity 2 role is filled by histidine 1080. Positions 1189 to 1340 (NGRTLSPFDC…ARVLETDQEG (152 aa)) are C-terminal hotdog fold 2. The active-site Proton donor; for dehydratase activity 2 is the aspartate 1251. Positions 1520–1713 (KGVYLITGGA…WKDGGMQIDA (194 aa)) are beta-ketoacyl reductase 1. A Carrier 2 domain is found at 1800 to 1873 (EKAENYFKQV…SLTRYFIDSR (74 aa)). O-(pantetheine 4'-phosphoryl)serine is present on serine 1834. A Ketosynthase family 3 (KS3) 2 domain is found at 1926–2365 (TEEIAIIGIS…GVNAHILIEE (440 aa)). Residues cysteine 2103, histidine 2238, and histidine 2278 each act as for beta-ketoacyl synthase 2 activity in the active site. Positions 2546–2568 (TEEPFAPVQPVIPKPSVDREASG) are disordered. 2 consecutive Carrier domains span residues 2597 to 2674 (ITAE…AHEL) and 2738 to 2815 (VAIE…KSEL). Serine 2634 and serine 2775 each carry O-(pantetheine 4'-phosphoryl)serine. The tract at residues 2828 to 2854 (SFEAAQQKPAASSHPKPAERPLQPVQH) is disordered. Residues 2873 to 3294 (EDAIAIVGMS…GTNAHIVIEE (422 aa)) form the Ketosynthase family 3 (KS3) 3 domain. Catalysis depends on for beta-ketoacyl synthase 3 activity residues cysteine 3040, histidine 3175, and histidine 3215. The beta-ketoacyl reductase 2 stretch occupies residues 3686-3887 (DKVLLITGGT…PNWKETGLGE (202 aa)). The region spanning 3960–4037 (NLFPETVDWL…SFAHWLISKY (78 aa)) is the Carrier 5 domain. At serine 3997 the chain carries O-(pantetheine 4'-phosphoryl)serine. The Ketosynthase family 3 (KS3) 4 domain occupies 4082–4485 (AEDIAIIGLS…GTNAHLIIEG (404 aa)). Cysteine 4237 acts as the For beta-ketoacyl synthase 4 activity in catalysis.

It depends on pantetheine 4'-phosphate as a cofactor.

Its subcellular location is the cytoplasm. Its pathway is antibiotic biosynthesis; bacillaene biosynthesis. Functionally, involved in some intermediate steps for the synthesis of the antibiotic polyketide bacillaene which is involved in secondary metabolism. This Bacillus subtilis (strain 168) protein is Polyketide synthase PksL (pksL).